Consider the following 194-residue polypeptide: dITP/XTP pyrophosphatase (194 aa).

8–13 is a substrate binding site; the sequence is TGNPGK. 2 residues coordinate Mg(2+): glutamate 38 and aspartate 67. The active-site Proton acceptor is the aspartate 67. Substrate contacts are provided by residues serine 68, 146–149, lysine 169, and 174–175; these read FGYD and HR.

The protein belongs to the HAM1 NTPase family. As to quaternary structure, homodimer. The cofactor is Mg(2+).

It carries out the reaction XTP + H2O = XMP + diphosphate + H(+). The catalysed reaction is dITP + H2O = dIMP + diphosphate + H(+). It catalyses the reaction ITP + H2O = IMP + diphosphate + H(+). Its function is as follows. Pyrophosphatase that catalyzes the hydrolysis of nucleoside triphosphates to their monophosphate derivatives, with a high preference for the non-canonical purine nucleotides XTP (xanthosine triphosphate), dITP (deoxyinosine triphosphate) and ITP. Seems to function as a house-cleaning enzyme that removes non-canonical purine nucleotides from the nucleotide pool, thus preventing their incorporation into DNA/RNA and avoiding chromosomal lesions. This Synechocystis sp. (strain ATCC 27184 / PCC 6803 / Kazusa) protein is dITP/XTP pyrophosphatase.